A 185-amino-acid polypeptide reads, in one-letter code: Elongation factor P (185 aa).

This sequence belongs to the elongation factor P family.

The protein localises to the cytoplasm. It participates in protein biosynthesis; polypeptide chain elongation. Involved in peptide bond synthesis. Stimulates efficient translation and peptide-bond synthesis on native or reconstituted 70S ribosomes in vitro. Probably functions indirectly by altering the affinity of the ribosome for aminoacyl-tRNA, thus increasing their reactivity as acceptors for peptidyl transferase. This is Elongation factor P from Desulfovibrio desulfuricans (strain ATCC 27774 / DSM 6949 / MB).